Reading from the N-terminus, the 140-residue chain is Nucleoside diphosphate kinase (140 aa).

Lys11, Phe59, Arg87, Thr93, Arg104, and Asn114 together coordinate ATP. His117 functions as the Pros-phosphohistidine intermediate in the catalytic mechanism.

The protein belongs to the NDK family. In terms of assembly, homotetramer. The cofactor is Mg(2+).

The protein localises to the cytoplasm. The catalysed reaction is a 2'-deoxyribonucleoside 5'-diphosphate + ATP = a 2'-deoxyribonucleoside 5'-triphosphate + ADP. It carries out the reaction a ribonucleoside 5'-diphosphate + ATP = a ribonucleoside 5'-triphosphate + ADP. Functionally, major role in the synthesis of nucleoside triphosphates other than ATP. The ATP gamma phosphate is transferred to the NDP beta phosphate via a ping-pong mechanism, using a phosphorylated active-site intermediate. The chain is Nucleoside diphosphate kinase from Rickettsia conorii (strain ATCC VR-613 / Malish 7).